The sequence spans 427 residues: Serine--tRNA ligase (427 aa).

Threonine 231–glutamate 233 provides a ligand contact to L-serine. Arginine 262–glutamate 264 lines the ATP pocket. Residue glutamate 285 participates in L-serine binding. Glutamate 349 to serine 352 contacts ATP. Residue serine 385 participates in L-serine binding.

The protein belongs to the class-II aminoacyl-tRNA synthetase family. Type-1 seryl-tRNA synthetase subfamily. In terms of assembly, homodimer. The tRNA molecule binds across the dimer.

It is found in the cytoplasm. The catalysed reaction is tRNA(Ser) + L-serine + ATP = L-seryl-tRNA(Ser) + AMP + diphosphate + H(+). The enzyme catalyses tRNA(Sec) + L-serine + ATP = L-seryl-tRNA(Sec) + AMP + diphosphate + H(+). It functions in the pathway aminoacyl-tRNA biosynthesis; selenocysteinyl-tRNA(Sec) biosynthesis; L-seryl-tRNA(Sec) from L-serine and tRNA(Sec): step 1/1. Catalyzes the attachment of serine to tRNA(Ser). Is also able to aminoacylate tRNA(Sec) with serine, to form the misacylated tRNA L-seryl-tRNA(Sec), which will be further converted into selenocysteinyl-tRNA(Sec). The protein is Serine--tRNA ligase of Rhizobium johnstonii (strain DSM 114642 / LMG 32736 / 3841) (Rhizobium leguminosarum bv. viciae).